The chain runs to 725 residues: Malate synthase G 2 (725 aa).

Residues valine 118, arginine 125–tyrosine 126, serine 276, and arginine 313 each bind acetyl-CoA. Arginine 340 (proton acceptor) is an active-site residue. Residues arginine 340, glutamate 429, and glycine 454–aspartate 457 contribute to the glyoxylate site. Glutamate 429 and aspartate 457 together coordinate Mg(2+). Acetyl-CoA is bound at residue proline 538. The residue at position 619 (cysteine 619) is a Cysteine sulfenic acid (-SOH). Residue aspartate 633 is the Proton donor of the active site.

It belongs to the malate synthase family. GlcB subfamily. Monomer. Requires Mg(2+) as cofactor.

The protein resides in the cytoplasm. The catalysed reaction is glyoxylate + acetyl-CoA + H2O = (S)-malate + CoA + H(+). Its pathway is carbohydrate metabolism; glyoxylate cycle; (S)-malate from isocitrate: step 2/2. Involved in the glycolate utilization. Catalyzes the condensation and subsequent hydrolysis of acetyl-coenzyme A (acetyl-CoA) and glyoxylate to form malate and CoA. This chain is Malate synthase G 2, found in Pseudomonas syringae pv. tomato (strain ATCC BAA-871 / DC3000).